Reading from the N-terminus, the 495-residue chain is Transcription termination/antitermination protein NusA (495 aa).

One can recognise an S1 motif domain in the interval 135 to 200; it reads GEIITGVVKK…RGAQLFVTRS (66 aa). One can recognise a KH domain in the interval 302–368; it reads KHTMDIAVEA…FTKYLDIDED (67 aa). 2 repeat units span residues 364-414 and 439-489. The interval 364–489 is 2 X 51 AA approximate repeats; sequence DIDEDFATVL…ALIMAARNIC (126 aa).

It belongs to the NusA family. As to quaternary structure, monomer. Binds directly to the core enzyme of the DNA-dependent RNA polymerase and to nascent RNA.

Its subcellular location is the cytoplasm. Its function is as follows. Participates in both transcription termination and antitermination. This Shigella flexneri protein is Transcription termination/antitermination protein NusA.